The sequence spans 44 residues: Photosystem I reaction center subunit IX (44 aa).

Residues 7–27 form a helical membrane-spanning segment; sequence YLSTVPVLTTLWFGSLAGLLI.

It belongs to the PsaJ family.

It localises to the plastid. The protein resides in the chloroplast thylakoid membrane. Its function is as follows. May help in the organization of the PsaE and PsaF subunits. The protein is Photosystem I reaction center subunit IX of Dioscorea elephantipes (Elephant's foot yam).